Reading from the N-terminus, the 447-residue chain is Phosphoglucosamine mutase (447 aa).

S104 acts as the Phosphoserine intermediate in catalysis. Mg(2+) contacts are provided by S104, D243, D245, and D247. S104 bears the Phosphoserine mark.

Belongs to the phosphohexose mutase family. It depends on Mg(2+) as a cofactor. Activated by phosphorylation.

It carries out the reaction alpha-D-glucosamine 1-phosphate = D-glucosamine 6-phosphate. Functionally, catalyzes the conversion of glucosamine-6-phosphate to glucosamine-1-phosphate. The sequence is that of Phosphoglucosamine mutase from Corynebacterium efficiens (strain DSM 44549 / YS-314 / AJ 12310 / JCM 11189 / NBRC 100395).